A 277-amino-acid chain; its full sequence is 3-methyl-2-oxobutanoate hydroxymethyltransferase (277 aa).

Residues aspartate 43 and aspartate 82 each coordinate Mg(2+). Residues 43 to 44 (DS), aspartate 82, and lysine 112 each bind 3-methyl-2-oxobutanoate. Glutamate 114 is a Mg(2+) binding site. Glutamate 181 acts as the Proton acceptor in catalysis.

This sequence belongs to the PanB family. In terms of assembly, homodecamer; pentamer of dimers. Mg(2+) serves as cofactor.

The protein localises to the cytoplasm. The enzyme catalyses 3-methyl-2-oxobutanoate + (6R)-5,10-methylene-5,6,7,8-tetrahydrofolate + H2O = 2-dehydropantoate + (6S)-5,6,7,8-tetrahydrofolate. The protein operates within cofactor biosynthesis; (R)-pantothenate biosynthesis; (R)-pantoate from 3-methyl-2-oxobutanoate: step 1/2. In terms of biological role, catalyzes the reversible reaction in which hydroxymethyl group from 5,10-methylenetetrahydrofolate is transferred onto alpha-ketoisovalerate to form ketopantoate. This is 3-methyl-2-oxobutanoate hydroxymethyltransferase from Listeria monocytogenes serotype 4b (strain CLIP80459).